We begin with the raw amino-acid sequence, 362 residues long: MEPTSEYTETYDYYDTGYNDSGCDYSEWEPSYSLIPVLYMLIFILGLSGNGVVIFTVWRAKSKRRAADVYIGNLALADLTFVITLPLWAVYTALGYHWPFGVALCKISSYVVLVNMYASVFCLTCLSFDRYLAIVHSLSSGRLRSRATMLASLGAIWFLSCLLAVPTLLFRTTVDDTGSNRTTCAMDFSLVTLNQDHESLWIAGLSLSSSALGFLLPFLAMTVCYCFIGCTVTRHFSHLRKEDQKKRRLLKIITTLVVVFAFCWTPFHVLKSMDALSYLDLAPNSCGFLHFLLLAHPYATCLAYVNSCLNPFLYAFFDLRFRSQCLCLLNLKKAMHGHMSSMSSTLSAQTQKSEVQSLATKV.

Over 1 to 34 the chain is Extracellular; it reads MEPTSEYTETYDYYDTGYNDSGCDYSEWEPSYSL. Residue N19 is glycosylated (N-linked (GlcNAc...) asparagine). Cystine bridges form between C23–C286 and C105–C184. Residues 35 to 55 form a helical membrane-spanning segment; the sequence is IPVLYMLIFILGLSGNGVVIF. The Cytoplasmic segment spans residues 56-73; it reads TVWRAKSKRRAADVYIGN. The helical transmembrane segment at 74–94 threads the bilayer; that stretch reads LALADLTFVITLPLWAVYTAL. The Extracellular portion of the chain corresponds to 95–106; that stretch reads GYHWPFGVALCK. The helical transmembrane segment at 107–127 threads the bilayer; sequence ISSYVVLVNMYASVFCLTCLS. The Cytoplasmic segment spans residues 128 to 149; it reads FDRYLAIVHSLSSGRLRSRATM. The helical transmembrane segment at 150-170 threads the bilayer; the sequence is LASLGAIWFLSCLLAVPTLLF. At 171–211 the chain is on the extracellular side; that stretch reads RTTVDDTGSNRTTCAMDFSLVTLNQDHESLWIAGLSLSSSA. N180 is a glycosylation site (N-linked (GlcNAc...) asparagine). The helical transmembrane segment at 212–232 threads the bilayer; that stretch reads LGFLLPFLAMTVCYCFIGCTV. The Cytoplasmic segment spans residues 233-248; that stretch reads TRHFSHLRKEDQKKRR. The chain crosses the membrane as a helical span at residues 249-269; the sequence is LLKIITTLVVVFAFCWTPFHV. Topologically, residues 270 to 284 are extracellular; sequence LKSMDALSYLDLAPN. Residues 285–305 traverse the membrane as a helical segment; the sequence is SCGFLHFLLLAHPYATCLAYV. Topologically, residues 306 to 362 are cytoplasmic; the sequence is NSCLNPFLYAFFDLRFRSQCLCLLNLKKAMHGHMSSMSSTLSAQTQKSEVQSLATKV.

This sequence belongs to the G-protein coupled receptor 1 family. First expressed before epiboly in dorsal precursors. During epiboly, expressed in the enveloping layer, yolk syncytial layer and migrating mesendoderm. During segmentation stages, expressed in epithelial structures such as adaxial cells, border cells of the newly formed somites, developing lens, otic vesicles and venous vasculature.

The protein localises to the cell membrane. G protein-coupled receptor for peptide hormones apelin (apln) and apelin receptor early endogenous ligand (apela), that plays a role in the regulation of normal cardiovascular function and fluid homeostasis. When acting as apelin receptor, activates both G(i) protein pathway that inhibits adenylate cyclase activity, and the beta-arrestin pathway that promotes internalization of the receptor. Also functions as mechanoreceptor that is activated by pathological stimuli in a G-protein-independent fashion to induce beta-arrestin signaling, hence eliciting cardiac hypertrophy. However, the presence of apelin ligand blunts cardiac hypertrophic induction from APLNR/APJ on response to pathological stimuli. Plays a key role in early development such as gastrulation, blood vessels formation and heart morphogenesis by acting as a receptor for apela hormone, promoting endoderm and mesendoderm cell migration and regulating the migration of cells fated to become myocardial progenitors, respectively. Positively regulates angioblast migration toward the embryonic midline, i.e. the position of the future vessel formation, during vasculogenesis. May promote sinus venosus (SV)-derived endothelial cells migration into the developing heart to promote coronary blood vessel development. Required for cardiovascular development, particularly for intersomitic vein angiogenesis by acting as a receptor for apln hormone. Also plays a role in various processes in adults such as regulation of blood vessel formation, blood pressure, heart contractility, and heart failure. Acts redundantly with agtrl1b in heart development. The protein is Apelin receptor A (aplnra) of Danio rerio (Zebrafish).